Consider the following 328-residue polypeptide: MCSTSVYDLEDIPLEDDDPNSIEFKILAFYARHHVFKNTPAVFSPKLSRTRSLSQKALGTWSTDSWTQVSLPCRGSPSSEKNISLGKKKSSWRTLFRVAEKEEGLPSSPKEIRAQGPQGPFPVERQSGFHNQHWPRSLSSVEQRLESEVVDSKVACIANRVAEIVYSWPPPDVIHSQGGSKLKERVSEILYFRFEGPCDSKNKDGEDQIISKIVELLKFSGDQLGREIKKDKALMSSFQDGLSYSTFKTITDLFLRDVDTRGESEVKARGFKAALAIDAIAKLTAIDNHPMNRMLGFGTKYLREYFSPWVQQNGGWEKILGISHEEVD.

Serine 44 is subject to Phosphoserine. Residues 213 to 227 (IVELLKFSGDQLGRE) carry the BH3 motif. A BH2 motif is present at residues 309–316 (WVQQNGGW).

The protein belongs to the Bcl-2 family. In terms of processing, phosphorylated by MELK, leading to inhibit its pro-apoptotic function.

It localises to the cytoplasm. Functionally, plays a role in apoptosis. The protein is Apoptosis facilitator Bcl-2-like protein 14 (Bcl2l14) of Mus musculus (Mouse).